Reading from the N-terminus, the 178-residue chain is Mediator of RNA polymerase II transcription subunit 30 (178 aa).

The segment at 1-22 is disordered; it reads MSTPPLAPTGMASGPFGGPQAQ. Ser-2 is subject to N-acetylserine. The stretch at 134–173 forms a coiled coil; the sequence is FASEERREIVEVNKKLKQKNQQLKQIMDQLRNLIWDINAM.

It belongs to the Mediator complex subunit 30 family. As to quaternary structure, component of the Mediator complex, which is composed of MED1, MED4, MED6, MED7, MED8, MED9, MED10, MED11, MED12, MED13, MED13L, MED14, MED15, MED16, MED17, MED18, MED19, MED20, MED21, MED22, MED23, MED24, MED25, MED26, MED27, MED29, MED30, MED31, CCNC, CDK8 and CDC2L6/CDK11. The MED12, MED13, CCNC and CDK8 subunits form a distinct module termed the CDK8 module. Mediator containing the CDK8 module is less active than Mediator lacking this module in supporting transcriptional activation. Individual preparations of the Mediator complex lacking one or more distinct subunits have been variously termed ARC, CRSP, DRIP, PC2, SMCC and TRAP.

It is found in the nucleus. In terms of biological role, component of the Mediator complex, a coactivator involved in the regulated transcription of nearly all RNA polymerase II-dependent genes. Mediator functions as a bridge to convey information from gene-specific regulatory proteins to the basal RNA polymerase II transcription machinery. Mediator is recruited to promoters by direct interactions with regulatory proteins and serves as a scaffold for the assembly of a functional preinitiation complex with RNA polymerase II and the general transcription factors. This is Mediator of RNA polymerase II transcription subunit 30 (Med30) from Mus musculus (Mouse).